Consider the following 172-residue polypeptide: Protein LHCP TRANSLOCATION DEFECT (172 aa).

The N-terminal 28 residues, 1–28, are a transit peptide targeting the chloroplast; sequence MASIPCTFQLSARASSASAAAAARRSPR. An ANK repeat occupies 114-146; it reads PVDILLMLAASEGDKPKLEELLRAGAKYDVKDV.

The protein localises to the plastid. The protein resides in the chloroplast. Involved in the import of light-harvesting complex proteins (LHCP) and subsequent routing of these proteins to the chloroplast signal recognition particle (SRP) pathway. The sequence is that of Protein LHCP TRANSLOCATION DEFECT (LTD) from Oryza sativa subsp. indica (Rice).